We begin with the raw amino-acid sequence, 396 residues long: Pre-mRNA-splicing regulator WTAP (396 aa).

At Met1 the chain carries N-acetylmethionine. Phosphoserine is present on Ser14. Low complexity-rich tracts occupy residues 240–257 (QQQQ…TTAS), 278–291 (SNGS…SGSG), and 304–316 (PSSP…SSNS). Positions 240–396 (QQQQSQASAP…SSVNVQGSVL (157 aa)) are disordered. Phosphoserine occurs at positions 305, 306, and 341. Positions 340 to 356 (DSPTGSENSLTHQSNDT) are enriched in polar residues. Thr350 is subject to Phosphothreonine. The span at 357–368 (DSSHDPQEEKAV) shows a compositional bias: basic and acidic residues. Positions 380 to 396 (HVQNGLDSSVNVQGSVL) are enriched in polar residues. Position 388 is a phosphoserine (Ser388).

The protein belongs to the fl(2)d family. In terms of assembly, component of the WMM complex, a N6-methyltransferase complex composed of a catalytic subcomplex, named MAC, and of an associated subcomplex, named MACOM. The MAC subcomplex is composed of METTL3 and METTL14. The MACOM subcomplex is composed of WTAP, ZC3H13, CBLL1/HAKAI, VIRMA, and, in some cases of RBM15 (RBM15 or RBM15B). Interacts with WT1. Also a component of a MACOM-like complex, named WTAP complex, composed of WTAP, ZC3H13, CBLL1, VIRMA, RBM15, BCLAF1 and THRAP3. Ubiquitously expressed.

The protein resides in the nucleus speckle. It is found in the nucleus. It localises to the nucleoplasm. Its subcellular location is the cytoplasm. Its function is as follows. Associated component of the WMM complex, a complex that mediates N6-methyladenosine (m6A) methylation of RNAs, a modification that plays a role in the efficiency of mRNA splicing and RNA processing. Required for accumulation of METTL3 and METTL14 to nuclear speckle. Acts as a mRNA splicing regulator. Regulates G2/M cell-cycle transition by binding to the 3' UTR of CCNA2, which enhances its stability. Impairs WT1 DNA-binding ability and inhibits expression of WT1 target genes. The sequence is that of Pre-mRNA-splicing regulator WTAP from Homo sapiens (Human).